The sequence spans 159 residues: NADH-quinone oxidoreductase subunit B (159 aa).

The [4Fe-4S] cluster site is built by Cys-37, Cys-38, Cys-102, and Cys-132.

The protein belongs to the complex I 20 kDa subunit family. In terms of assembly, NDH-1 is composed of 14 different subunits. Subunits NuoB, C, D, E, F, and G constitute the peripheral sector of the complex. The cofactor is [4Fe-4S] cluster.

Its subcellular location is the cell inner membrane. The catalysed reaction is a quinone + NADH + 5 H(+)(in) = a quinol + NAD(+) + 4 H(+)(out). Functionally, NDH-1 shuttles electrons from NADH, via FMN and iron-sulfur (Fe-S) centers, to quinones in the respiratory chain. The immediate electron acceptor for the enzyme in this species is believed to be ubiquinone. Couples the redox reaction to proton translocation (for every two electrons transferred, four hydrogen ions are translocated across the cytoplasmic membrane), and thus conserves the redox energy in a proton gradient. This chain is NADH-quinone oxidoreductase subunit B, found in Variovorax paradoxus (strain S110).